Reading from the N-terminus, the 310-residue chain is Putative F-box protein PP2-B2 (310 aa).

The interval 1 to 34 is disordered; the sequence is MIQSTMGHKQSVDSRGKGRKVPGSSSMVQKHRVE. The 47-residue stretch at 44-90 folds into the F-box domain; it reads PSLFDNLPEDCISNIISFTSPRDACVAASVSKTFESAVNSDSVWDKF.

The sequence is that of Putative F-box protein PP2-B2 (PP2B2) from Arabidopsis thaliana (Mouse-ear cress).